The chain runs to 86 residues: Small ribosomal subunit protein bS16 (86 aa).

This sequence belongs to the bacterial ribosomal protein bS16 family.

The polypeptide is Small ribosomal subunit protein bS16 (Thermoanaerobacter pseudethanolicus (strain ATCC 33223 / 39E) (Clostridium thermohydrosulfuricum)).